The following is a 149-amino-acid chain: Putative pre-16S rRNA nuclease (149 aa).

The protein belongs to the YqgF nuclease family.

It is found in the cytoplasm. Could be a nuclease involved in processing of the 5'-end of pre-16S rRNA. In Burkholderia multivorans (strain ATCC 17616 / 249), this protein is Putative pre-16S rRNA nuclease.